The primary structure comprises 188 residues: Elongation factor P (188 aa).

Lys34 is modified (N6-(3,6-diaminohexanoyl)-5-hydroxylysine).

It belongs to the elongation factor P family. Is beta-lysylated on the epsilon-amino group of Lys-34 by the combined action of EpmA and EpmB, and then hydroxylated on the C5 position of the same residue by EpmC. Lysylation is critical for the stimulatory effect of EF-P on peptide-bond formation. The lysylation moiety would extend toward the peptidyltransferase center and stabilize the terminal 3-CCA end of the tRNA. The hydroxylation of the C5 position on Lys-34 would allow additional potential stabilizing hydrogen-bond interactions with the P-tRNA.

Its subcellular location is the cytoplasm. The protein operates within protein biosynthesis; polypeptide chain elongation. Involved in peptide bond synthesis. Alleviates ribosome stalling that occurs when 3 or more consecutive Pro residues or the sequence PPG is present in a protein, possibly by augmenting the peptidyl transferase activity of the ribosome. Modification of Lys-34 is required for alleviation. This is Elongation factor P from Shigella boydii serotype 18 (strain CDC 3083-94 / BS512).